Reading from the N-terminus, the 157-residue chain is Putative pre-16S rRNA nuclease (157 aa).

Belongs to the YqgF nuclease family.

The protein resides in the cytoplasm. In terms of biological role, could be a nuclease involved in processing of the 5'-end of pre-16S rRNA. The protein is Putative pre-16S rRNA nuclease of Parasynechococcus marenigrum (strain WH8102).